The following is a 310-amino-acid chain: NADP-dependent D-sorbitol-6-phosphate dehydrogenase (310 aa).

The active-site Proton donor is the Tyr-48. His-108 provides a ligand contact to substrate. 210–272 (TPLGGAAANK…SSKIQRLKEN (63 aa)) is a binding site for NADP(+).

This sequence belongs to the aldo/keto reductase family.

It catalyses the reaction D-sorbitol 6-phosphate + NADP(+) = aldehydo-D-glucose 6-phosphate + NADPH + H(+). In terms of biological role, synthesizes sorbitol-6-phosphate, a key intermediate in the synthesis of sorbitol which is a major photosynthetic product in many members of the Rosaceae family. This chain is NADP-dependent D-sorbitol-6-phosphate dehydrogenase (S6PDH), found in Malus domestica (Apple).